Consider the following 1026-residue polypeptide: DNA cross-link repair 1A protein (1026 aa).

Residues methionine 1–proline 189 form a nuclear localization region region. Residues glutamate 12–threonine 110 are disordered. Basic and acidic residues predominate over residues serine 34 to cysteine 65. Over residues serine 71–serine 82 the composition is skewed to low complexity. A compositionally biased stretch (basic residues) spans lysine 98–lysine 107. The UBZ4-type zinc-finger motif lies at aspartate 118 to proline 148. The Zn(2+) site is built by cysteine 121, cysteine 124, histidine 139, and cysteine 143. Glycyl lysine isopeptide (Lys-Gly) (interchain with G-Cter in SUMO2) cross-links involve residues lysine 359, lysine 434, and lysine 522. The nuclear focus formation stretch occupies residues serine 401–alanine 602. Disordered regions lie at residues proline 474 to valine 542, glutamate 560 to lysine 590, and alanine 602 to glycine 651. The segment covering serine 527–lysine 540 has biased composition (low complexity). A compositionally biased stretch (polar residues) spans glutamate 569 to glutamine 581. A phosphoserine mark is found at serine 574 and serine 578. The span at arginine 619–threonine 628 shows a compositional bias: basic residues. A Glycyl lysine isopeptide (Lys-Gly) (interchain with G-Cter in SUMO2) cross-link involves residue lysine 657.

The protein belongs to the DNA repair metallo-beta-lactamase (DRMBL) family. Binds constitutively to TP53BP1. Binds CDC27, which is itself a component of the anaphase promoting complex (APC). Binds PIAS1.

The protein localises to the nucleus. The enzyme catalyses a beta-lactam + H2O = a substituted beta-amino acid. In terms of biological role, may be required for DNA interstrand cross-link repair. Also required for checkpoint mediated cell cycle arrest in early prophase in response to mitotic spindle poisons. This chain is DNA cross-link repair 1A protein (Dclre1a), found in Mus musculus (Mouse).